A 494-amino-acid polypeptide reads, in one-letter code: MTLRRASGCRQLTLTIGLALTLGLLQWPIGDVRGQDGASPAQVLQELLTRYGDNASISVPQLRSLLVRLNGGQSEDHDSKTQPTRTNASKCLAADTLAVYGMSEQSRIDERGLQQICPTMIQQLDSQACKTQPNQESESSPRPTEAEVWGYGLLCVTVISLCSLVGASVVPFMRKTFYKRLLLYFIALAIGTLYSNALFQLIPEAFGFDPMEDYYVPKSAVVFGGFYLFFFTEKILKMILKPKDTGGHGHGHSHFPAERYANSNGDLEDGVMEKLQNGEAGGAALPRAEADGRGVGEDDKMLSTGQTVQDTQSSGGGGTGGCYWLKGRAYSDIGTLAWMITLSDGLHNFIDGLAIGASFTASVFQGISTSVAILCEEFPHELGDFVILLNAGMSIQQALFFNFLSACCCYLGMGFGILAGNNFSPNWIFALAGGMFLYIALADMFPEMNEVSREEEEAGGSGFLLTFALQNAGLLTGFAIMLVLTIYSGQIQLG.

A signal peptide spans 1-34 (MTLRRASGCRQLTLTIGLALTLGLLQWPIGDVRG). Over 35–152 (QDGASPAQVL…PTEAEVWGYG (118 aa)) the chain is Extracellular. A helical transmembrane segment spans residues 153 to 173 (LLCVTVISLCSLVGASVVPFM). At 174 to 181 (RKTFYKRL) the chain is on the cytoplasmic side. A helical membrane pass occupies residues 182 to 202 (LLYFIALAIGTLYSNALFQLI). Topologically, residues 203-219 (PEAFGFDPMEDYYVPKS) are extracellular. A helical membrane pass occupies residues 220 to 240 (AVVFGGFYLFFFTEKILKMIL). Over 241–397 (KPKDTGGHGH…LLNAGMSIQQ (157 aa)) the chain is Cytoplasmic. The short motif at 248 to 255 (HGHGHSHF) is the HHHGHXHX-motif element. The XEXPHE-motif motif lies at 376 to 381 (EEFPHE). A helical membrane pass occupies residues 398-418 (ALFFNFLSACCCYLGMGFGIL). Residues 419–426 (AGNNFSPN) lie on the Extracellular side of the membrane. Residues 427–447 (WIFALAGGMFLYIALADMFPE) traverse the membrane as a helical segment. At 448–462 (MNEVSREEEEAGGSG) the chain is on the cytoplasmic side. Residues 463–483 (FLLTFALQNAGLLTGFAIMLV) form a helical membrane-spanning segment. At 484 to 494 (LTIYSGQIQLG) the chain is on the extracellular side.

This sequence belongs to the ZIP transporter (TC 2.A.5) family. In terms of assembly, homotrimer.

The protein localises to the cell membrane. It localises to the apical cell membrane. Its subcellular location is the basolateral cell membrane. It is found in the early endosome membrane. The protein resides in the late endosome membrane. The protein localises to the lysosome membrane. It carries out the reaction Zn(2+)(out) + 2 hydrogencarbonate(out) = Zn(2+)(in) + 2 hydrogencarbonate(in). The enzyme catalyses Mn(2+)(out) + 2 hydrogencarbonate(out) = Mn(2+)(in) + 2 hydrogencarbonate(in). It catalyses the reaction Fe(2+)(out) + 2 hydrogencarbonate(out) = Fe(2+)(in) + 2 hydrogencarbonate(in). The catalysed reaction is Cd(2+)(out) + 2 hydrogencarbonate(out) = Cd(2+)(in) + 2 hydrogencarbonate(in). Functionally, broad-scope metal ion transporter with a preference for zinc uptake. Also mediates cellular uptake of nontransferrin-bound iron. Electroneutral transporter of the plasma membrane mediating the cellular uptake of the divalent metal cations zinc, manganese and iron that are important for tissue homeostasis, metabolism, development and immunity. Functions as an energy-dependent symporter, transporting through the membranes an electroneutral complex composed of a divalent metal cation and two bicarbonate anions. Beside these endogenous cellular substrates, can also import cadmium a non-essential metal which is cytotoxic and carcinogenic. The chain is Metal cation symporter ZIP14 from Danio rerio (Zebrafish).